The primary structure comprises 396 residues: Chalcone synthase (396 aa).

The active site involves C167.

Belongs to the thiolase-like superfamily. Chalcone/stilbene synthases family.

The enzyme catalyses (E)-4-coumaroyl-CoA + 3 malonyl-CoA + 3 H(+) = 2',4,4',6'-tetrahydroxychalcone + 3 CO2 + 4 CoA. It participates in secondary metabolite biosynthesis; flavonoid biosynthesis. Functionally, the primary product of this enzyme is 4,2',4',6'-tetrahydroxychalcone (also termed naringenin-chalcone or chalcone) which can under specific conditions spontaneously isomerize into naringenin. The protein is Chalcone synthase (CHS) of Chrysosplenium americanum (American golden saxifrage).